The sequence spans 350 residues: Anthranilate phosphoribosyltransferase (350 aa).

5-phospho-alpha-D-ribose 1-diphosphate is bound by residues Gly81, Gly84–Asp85, Thr89, Asn91–Thr94, Lys109–Ser117, and Ser121. Gly81 is an anthranilate binding site. Ser93 contributes to the Mg(2+) binding site. Residue Arg167 coordinates anthranilate. Positions 230 and 231 each coordinate Mg(2+).

It belongs to the anthranilate phosphoribosyltransferase family. Homodimer. It depends on Mg(2+) as a cofactor.

The enzyme catalyses N-(5-phospho-beta-D-ribosyl)anthranilate + diphosphate = 5-phospho-alpha-D-ribose 1-diphosphate + anthranilate. Its pathway is amino-acid biosynthesis; L-tryptophan biosynthesis; L-tryptophan from chorismate: step 2/5. Catalyzes the transfer of the phosphoribosyl group of 5-phosphorylribose-1-pyrophosphate (PRPP) to anthranilate to yield N-(5'-phosphoribosyl)-anthranilate (PRA). The polypeptide is Anthranilate phosphoribosyltransferase (Nitrosospira multiformis (strain ATCC 25196 / NCIMB 11849 / C 71)).